The chain runs to 292 residues: Elongation factor Ts (292 aa).

Residues 80–83 form an involved in Mg(2+) ion dislocation from EF-Tu region; it reads TDFV.

The protein belongs to the EF-Ts family.

The protein localises to the cytoplasm. Functionally, associates with the EF-Tu.GDP complex and induces the exchange of GDP to GTP. It remains bound to the aminoacyl-tRNA.EF-Tu.GTP complex up to the GTP hydrolysis stage on the ribosome. This Psychrobacter sp. (strain PRwf-1) protein is Elongation factor Ts.